The sequence spans 126 residues: Protein translocase subunit SecE (126 aa).

The next 3 membrane-spanning stretches (helical) occupy residues 20–40, 42–62, and 97–117; these read WLAAFVLAAAAVVGNYLYGEM, VVVRAAGVVVLIAAALGVAAT, and IVLAVSIVMALVLWGIDGIMV.

It belongs to the SecE/SEC61-gamma family. As to quaternary structure, component of the Sec protein translocase complex. Heterotrimer consisting of SecY, SecE and SecG subunits. The heterotrimers can form oligomers, although 1 heterotrimer is thought to be able to translocate proteins. Interacts with the ribosome. Interacts with SecDF, and other proteins may be involved. Interacts with SecA.

It is found in the cell inner membrane. Functionally, essential subunit of the Sec protein translocation channel SecYEG. Clamps together the 2 halves of SecY. May contact the channel plug during translocation. The protein is Protein translocase subunit SecE of Vibrio alginolyticus.